Consider the following 418-residue polypeptide: Light-independent protochlorophyllide reductase subunit N (418 aa).

[4Fe-4S] cluster-binding residues include Cys17, Cys42, and Cys103.

Belongs to the BchN/ChlN family. Protochlorophyllide reductase is composed of three subunits; ChlL, ChlN and ChlB. Forms a heterotetramer of two ChlB and two ChlN subunits. It depends on [4Fe-4S] cluster as a cofactor.

It catalyses the reaction chlorophyllide a + oxidized 2[4Fe-4S]-[ferredoxin] + 2 ADP + 2 phosphate = protochlorophyllide a + reduced 2[4Fe-4S]-[ferredoxin] + 2 ATP + 2 H2O. It participates in porphyrin-containing compound metabolism; chlorophyll biosynthesis (light-independent). Component of the dark-operative protochlorophyllide reductase (DPOR) that uses Mg-ATP and reduced ferredoxin to reduce ring D of protochlorophyllide (Pchlide) to form chlorophyllide a (Chlide). This reaction is light-independent. The NB-protein (ChlN-ChlB) is the catalytic component of the complex. The protein is Light-independent protochlorophyllide reductase subunit N of Prochlorococcus marinus (strain MIT 9313).